Reading from the N-terminus, the 105-residue chain is MRQFNLLLVFCLIALTALPVFSFPNGLTMDSIDMEPMGAFDENGAADESPRVKRYGGWGGRGGWGRGGGRGYGGRGGGWGGRGGGWGRGGGGRGFYGGGRRGWGK.

The N-terminal stretch at 1-22 is a signal peptide; it reads MRQFNLLLVFCLIALTALPVFS. Positions 23 to 54 are excised as a propeptide; that stretch reads FPNGLTMDSIDMEPMGAFDENGAADESPRVKR. Glycine amide is present on G59. The residue at position 64 (W64) is a Tryptophan amide. A glycine amide mark is found at G68, G73, and G80. W86 bears the Tryptophan amide mark. Glycine amide occurs at positions 91 and 98. W103 is modified (tryptophan amide).

It belongs to the YARP (YGGW-amide related peptide) family.

The protein localises to the secreted. In terms of biological role, may have antimicrobial activity. The polypeptide is Neuropeptide-like protein 32 (nlp-32) (Caenorhabditis elegans).